The primary structure comprises 340 residues: tRNA-cytidine(32) 2-sulfurtransferase (340 aa).

The short motif at 74 to 79 (SGGKDS) is the PP-loop motif element. [4Fe-4S] cluster is bound by residues cysteine 149, cysteine 152, and cysteine 240.

Belongs to the TtcA family. In terms of assembly, homodimer. Mg(2+) serves as cofactor. Requires [4Fe-4S] cluster as cofactor.

The protein localises to the cytoplasm. It carries out the reaction cytidine(32) in tRNA + S-sulfanyl-L-cysteinyl-[cysteine desulfurase] + AH2 + ATP = 2-thiocytidine(32) in tRNA + L-cysteinyl-[cysteine desulfurase] + A + AMP + diphosphate + H(+). Its pathway is tRNA modification. Functionally, catalyzes the ATP-dependent 2-thiolation of cytidine in position 32 of tRNA, to form 2-thiocytidine (s(2)C32). The sulfur atoms are provided by the cysteine/cysteine desulfurase (IscS) system. In Burkholderia ambifaria (strain MC40-6), this protein is tRNA-cytidine(32) 2-sulfurtransferase.